The primary structure comprises 40 residues: Photosystem II reaction center protein J (40 aa).

The chain crosses the membrane as a helical span at residues 8–28; it reads IPLWLIGTVAGILVLGLLGIF.

The protein belongs to the PsbJ family. PSII is composed of 1 copy each of membrane proteins PsbA, PsbB, PsbC, PsbD, PsbE, PsbF, PsbH, PsbI, PsbJ, PsbK, PsbL, PsbM, PsbT, PsbX, PsbY, PsbZ, Psb30/Ycf12, at least 3 peripheral proteins of the oxygen-evolving complex and a large number of cofactors. It forms dimeric complexes.

The protein resides in the plastid. The protein localises to the chloroplast thylakoid membrane. In terms of biological role, one of the components of the core complex of photosystem II (PSII). PSII is a light-driven water:plastoquinone oxidoreductase that uses light energy to abstract electrons from H(2)O, generating O(2) and a proton gradient subsequently used for ATP formation. It consists of a core antenna complex that captures photons, and an electron transfer chain that converts photonic excitation into a charge separation. The protein is Photosystem II reaction center protein J of Physcomitrium patens (Spreading-leaved earth moss).